Consider the following 396-residue polypeptide: Ribosomal RNA large subunit methyltransferase I (396 aa).

In terms of domain architecture, PUA spans 2–79; it reads AIRIKLKPGR…REEEIDREFF (78 aa).

It belongs to the methyltransferase superfamily. RlmI family.

Its subcellular location is the cytoplasm. The enzyme catalyses cytidine(1962) in 23S rRNA + S-adenosyl-L-methionine = 5-methylcytidine(1962) in 23S rRNA + S-adenosyl-L-homocysteine + H(+). In terms of biological role, specifically methylates the cytosine at position 1962 (m5C1962) of 23S rRNA. The polypeptide is Ribosomal RNA large subunit methyltransferase I (Shewanella oneidensis (strain ATCC 700550 / JCM 31522 / CIP 106686 / LMG 19005 / NCIMB 14063 / MR-1)).